A 539-amino-acid polypeptide reads, in one-letter code: GMP synthase [glutamine-hydrolyzing] (539 aa).

The Glutamine amidotransferase type-1 domain occupies T20–N215. Catalysis depends on C96, which acts as the Nucleophile. Residues H189 and E191 contribute to the active site. The 198-residue stretch at W216–R413 folds into the GMPS ATP-PPase domain. Residue S244–T250 participates in ATP binding. R317, D475, K531, and E537 together coordinate XMP.

In terms of assembly, homodimer. It depends on Mg(2+) as a cofactor.

The protein localises to the cytoplasm. It is found in the cytosol. It carries out the reaction XMP + L-glutamine + ATP + H2O = GMP + L-glutamate + AMP + diphosphate + 2 H(+). The protein operates within purine metabolism; GMP biosynthesis; GMP from XMP (L-Gln route): step 1/1. In terms of biological role, catalyzes the conversion of xanthine monophosphate (XMP) to GMP in the presence of glutamine and ATP through an adenyl-XMP intermediate. This Schizosaccharomyces pombe (strain 972 / ATCC 24843) (Fission yeast) protein is GMP synthase [glutamine-hydrolyzing].